We begin with the raw amino-acid sequence, 465 residues long: Cysteine--tRNA ligase (465 aa).

Residue Cys30 participates in Zn(2+) binding. Positions 32–42 (ITVYDYCHVGH) match the 'HIGH' region motif. Zn(2+) is bound by residues Cys214, His239, and Glu243. The 'KMSKS' region motif lies at 271-275 (KMSKS). Position 274 (Lys274) interacts with ATP.

It belongs to the class-I aminoacyl-tRNA synthetase family. As to quaternary structure, monomer. Zn(2+) serves as cofactor.

The protein localises to the cytoplasm. It carries out the reaction tRNA(Cys) + L-cysteine + ATP = L-cysteinyl-tRNA(Cys) + AMP + diphosphate. This is Cysteine--tRNA ligase from Burkholderia cenocepacia (strain ATCC BAA-245 / DSM 16553 / LMG 16656 / NCTC 13227 / J2315 / CF5610) (Burkholderia cepacia (strain J2315)).